A 147-amino-acid polypeptide reads, in one-letter code: Small ribosomal subunit protein bS18 (147 aa).

This sequence belongs to the bacterial ribosomal protein bS18 family. As to quaternary structure, part of the 30S ribosomal subunit. Forms a tight heterodimer with protein bS6.

Binds as a heterodimer with protein bS6 to the central domain of the 16S rRNA, where it helps stabilize the platform of the 30S subunit. The polypeptide is Small ribosomal subunit protein bS18 (Dehalococcoides mccartyi (strain ATCC BAA-2100 / JCM 16839 / KCTC 5957 / BAV1)).